The following is a 501-amino-acid chain: Circadian clock oscillator protein KaiC (501 aa).

2 consecutive KaiC domains span residues 1-232 (MQVQ…ITVF) and 246-501 (IRIS…REKK). ATP is bound by residues Gly-34, Thr-35, Gly-36, Lys-37, Thr-38, Ser-74, Lys-209, Leu-210, Arg-211, Thr-213, His-215, Thr-275, Gly-276, Thr-277, Gly-278, Lys-279, and Thr-280. Thr-38 lines the Mg(2+) pocket. Residues Thr-280 and Glu-303 each contribute to the Mg(2+) site. Residue Trp-316 coordinates ATP. Ser-416 is modified (phosphoserine; by autocatalysis). At Thr-417 the chain carries Phosphothreonine; by autocatalysis. ATP-binding residues include Arg-436, Lys-442, Met-443, Arg-444, Ser-446, His-448, and Lys-450.

This sequence belongs to the KaiC family. As to quaternary structure, homohexamer; hexamerization is dependent on ATP-binding. Component of the KaiBC complex. KaiC interacts with SasA, activating its autokinase function and leading to RpaA activation. Mg(2+) is required as a cofactor. Post-translationally, phosphorylated on serine and threonine residues by autocatalysis. Has a 4 step phosphorylation cycle; the autokinase acts first on Thr-417, then Ser-416. When Ser-416 is modified KaiC switches to an autophosphatase mode, acting first on phospho-Thr-417 then phospho-Ser-416.

It carries out the reaction L-seryl-[protein] + ATP = O-phospho-L-seryl-[protein] + ADP + H(+). The catalysed reaction is L-threonyl-[protein] + ATP = O-phospho-L-threonyl-[protein] + ADP + H(+). It catalyses the reaction ATP + H2O = ADP + phosphate + H(+). In terms of biological role, central component of the KaiBC oscillator complex, which constitutes the main circadian regulator in cyanobacteria. Its composition changes during the circadian cycle to control KaiC phosphorylation. Autophosphorylates and has a weak ATPase activity; ATPase activity defines the circadian period. This is Circadian clock oscillator protein KaiC from Prochlorococcus marinus (strain SARG / CCMP1375 / SS120).